The sequence spans 113 residues: Iron-sulfur cluster insertion protein ErpA (113 aa).

Positions 41, 105, and 107 each coordinate iron-sulfur cluster.

The protein belongs to the HesB/IscA family. As to quaternary structure, homodimer. Iron-sulfur cluster is required as a cofactor.

Required for insertion of 4Fe-4S clusters for at least IspG. In Vibrio parahaemolyticus serotype O3:K6 (strain RIMD 2210633), this protein is Iron-sulfur cluster insertion protein ErpA.